The primary structure comprises 363 residues: 3-isopropylmalate dehydrogenase (363 aa).

An NAD(+)-binding site is contributed by 78 to 91 (GPKWENLPPESQPE). Substrate contacts are provided by R99, R109, R138, and D227. Residues D227, D251, and D255 each contribute to the Mg(2+) site. NAD(+) is bound at residue 285-297 (GSAPDIAGKNIAN).

This sequence belongs to the isocitrate and isopropylmalate dehydrogenases family. LeuB type 1 subfamily. As to quaternary structure, homodimer. Mg(2+) serves as cofactor. It depends on Mn(2+) as a cofactor.

It localises to the cytoplasm. The catalysed reaction is (2R,3S)-3-isopropylmalate + NAD(+) = 4-methyl-2-oxopentanoate + CO2 + NADH. The protein operates within amino-acid biosynthesis; L-leucine biosynthesis; L-leucine from 3-methyl-2-oxobutanoate: step 3/4. Catalyzes the oxidation of 3-carboxy-2-hydroxy-4-methylpentanoate (3-isopropylmalate) to 3-carboxy-4-methyl-2-oxopentanoate. The product decarboxylates to 4-methyl-2 oxopentanoate. This chain is 3-isopropylmalate dehydrogenase, found in Salmonella typhi.